Consider the following 425-residue polypeptide: MMSVLKKICGSKNSLKSFDNEVYQSIEKELQRQKSQLQLIASENFASKAVMEAQGSFLTNKYAEGYPGKRYYCGCEHVDKIESLAIERLCKLFGVKFANVQPHSGSQANQAVFASLLTPGDTILGLSLSCGGHLTHGAAPSLSGKWFKSIQYTVNKDTYLLDMDEIEKLALEHKPKLIIAGASAYPRKMDFKRFREIADKVGAYLLADIAHYAGLIAAGEYPSPAEYAHVMTSTTHKTLRGPRGGIVMTNDEILHKKIQSAVFPGLQGGPLMHVIAAKAVAFKEALAPEFKTYSKKVVENAKVLAQELQKHGLDIITGGTDSHIVLVDLRSQKLTGKDVVDSLERAGITCNKNSVPFDTAKPTITSGLRFGTAAETTRGLEAENFKEIADLINEVIQGLISGNSSSVEKAVKAKVERICSNFPIY.

(6S)-5,6,7,8-tetrahydrofolate is bound by residues L128 and G132 to L134. At K237 the chain carries N6-(pyridoxal phosphate)lysine.

This sequence belongs to the SHMT family. As to quaternary structure, homodimer. The cofactor is pyridoxal 5'-phosphate.

It is found in the cytoplasm. It carries out the reaction (6R)-5,10-methylene-5,6,7,8-tetrahydrofolate + glycine + H2O = (6S)-5,6,7,8-tetrahydrofolate + L-serine. It functions in the pathway one-carbon metabolism; tetrahydrofolate interconversion. Its pathway is amino-acid biosynthesis; glycine biosynthesis; glycine from L-serine: step 1/1. Catalyzes the reversible interconversion of serine and glycine with tetrahydrofolate (THF) serving as the one-carbon carrier. This reaction serves as the major source of one-carbon groups required for the biosynthesis of purines, thymidylate, methionine, and other important biomolecules. Also exhibits THF-independent aldolase activity toward beta-hydroxyamino acids, producing glycine and aldehydes, via a retro-aldol mechanism. This chain is Serine hydroxymethyltransferase, found in Wolbachia sp. subsp. Drosophila simulans (strain wRi).